We begin with the raw amino-acid sequence, 641 residues long: Mannosyl-oligosaccharide 1,2-alpha-mannosidase IB (641 aa).

N-acetylthreonine is present on Thr-2. The Cytoplasmic portion of the chain corresponds to Thr-2–Lys-36. A helical; Signal-anchor for type II membrane protein membrane pass occupies residues Phe-37–Leu-57. Topologically, residues Pro-58–Arg-641 are lumenal. Residues Asn-153–Asn-175 form a disordered region. An intrachain disulfide couples Cys-462 to Cys-494. Glu-508 functions as the Proton donor in the catalytic mechanism. Residue Thr-619 participates in Ca(2+) binding. A glycan (N-linked (GlcNAc...) asparagine) is linked at Asn-631.

This sequence belongs to the glycosyl hydrolase 47 family. Ca(2+) is required as a cofactor. As to expression, highest levels of expression in placenta and testis.

It localises to the golgi apparatus membrane. The catalysed reaction is N(4)-(alpha-D-Man-(1-&gt;2)-alpha-D-Man-(1-&gt;2)-alpha-D-Man-(1-&gt;3)-[alpha-D-Man-(1-&gt;2)-alpha-D-Man-(1-&gt;3)-[alpha-D-Man-(1-&gt;2)-alpha-D-Man-(1-&gt;6)]-alpha-D-Man-(1-&gt;6)]-beta-D-Man-(1-&gt;4)-beta-D-GlcNAc-(1-&gt;4)-beta-D-GlcNAc)-L-asparaginyl-[protein] (N-glucan mannose isomer 9A1,2,3B1,2,3) + 4 H2O = N(4)-(alpha-D-Man-(1-&gt;3)-[alpha-D-Man-(1-&gt;3)-[alpha-D-Man-(1-&gt;6)]-alpha-D-Man-(1-&gt;6)]-beta-D-Man-(1-&gt;4)-beta-D-GlcNAc-(1-&gt;4)-beta-D-GlcNAc)-L-asparaginyl-[protein] (N-glucan mannose isomer 5A1,2) + 4 beta-D-mannose. It carries out the reaction N(4)-(alpha-D-Man-(1-&gt;2)-alpha-D-Man-(1-&gt;2)-alpha-D-Man-(1-&gt;3)-[alpha-D-Man-(1-&gt;3)-[alpha-D-Man-(1-&gt;2)-alpha-D-Man-(1-&gt;6)]-alpha-D-Man-(1-&gt;6)]-beta-D-Man-(1-&gt;4)-beta-D-GlcNAc-(1-&gt;4)-beta-D-GlcNAc)-L-asparaginyl-[protein] (N-glucan mannose isomer 8A1,2,3B1,3) + 3 H2O = N(4)-(alpha-D-Man-(1-&gt;3)-[alpha-D-Man-(1-&gt;3)-[alpha-D-Man-(1-&gt;6)]-alpha-D-Man-(1-&gt;6)]-beta-D-Man-(1-&gt;4)-beta-D-GlcNAc-(1-&gt;4)-beta-D-GlcNAc)-L-asparaginyl-[protein] (N-glucan mannose isomer 5A1,2) + 3 beta-D-mannose. It functions in the pathway protein modification; protein glycosylation. Its activity is regulated as follows. Inhibited by both 1-deoxymannojirimycin and kifunensine. In terms of biological role, involved in the maturation of Asn-linked oligosaccharides. Progressively trim alpha-1,2-linked mannose residues from Man(9)GlcNAc(2) to produce Man(5)GlcNAc(2). The sequence is that of Mannosyl-oligosaccharide 1,2-alpha-mannosidase IB (MAN1A2) from Homo sapiens (Human).